A 250-amino-acid chain; its full sequence is Aquaporin (250 aa).

Residues 1-15 lie on the Cytoplasmic side of the membrane; that stretch reads MTRETLKTLQSTFGE. Residues 16–36 traverse the membrane as a helical segment; that stretch reads MVASFVFGFAVYSALLGSALT. At 37 to 42 the chain is on the extracellular side; it reads EQSAAR. A helical transmembrane segment spans residues 43–63; that stretch reads VIVGLTVGFSGICVIYSFCDV. At 64–86 the chain is on the cytoplasmic side; the sequence is TVAHFNPAITLAAILTCKLGVLR. The NPA signature appears at 69–71; it reads NPA. The helical transmembrane segment at 87–107 threads the bilayer; the sequence is GIGYIVAQYIGFILAVCALLP. The Extracellular segment spans residues 108–133; it reads CSPVGYKETLNIIRPTPSPFGGDNLN. Residues 134–154 form a helical membrane-spanning segment; the sequence is VFFTEFFLTAILVHVAFATAV. Residues 155 to 179 are Cytoplasmic-facing; sequence NPYKPKTDTEGKFVDPDEEEPVDRR. Residues 180-200 form a helical membrane-spanning segment; sequence ITAPLCIGLTLGFLAFLGLAS. At 201 to 224 the chain is on the extracellular side; it reads SGGAFNPGLTLAPVIMSNTWNHFW. The short motif at 206–208 is the NPG element; the sequence is NPG. A helical transmembrane segment spans residues 225-245; that stretch reads AYFAGQYLGGFVGGLLQVLVL. Topologically, residues 246–250 are cytoplasmic; the sequence is YKLSF.

Belongs to the MIP/aquaporin (TC 1.A.8) family.

The protein resides in the cell membrane. Its function is as follows. Water channel required to facilitate the transport of water across membranes. Involved in osmotolerance. The sequence is that of Aquaporin (AQP) from Encephalitozoon cuniculi (strain GB-M1) (Microsporidian parasite).